Here is a 438-residue protein sequence, read N- to C-terminus: MFLPQEFIRRKRDGQPLDRDDMAAFVRGVTDGSVTEGQVAAFAMAVYFNDLSTDERVALTLAQRDSGDVLDWRALDLGGPVIDKHSTGGVGDVVSLMLGPMVAACGGYVPMISGRGLGHTGGTLDKLSAIPGYDVMPDTDAFRRTVREVGVAIIGQTARLAPADKRIYAIRDVTATVESVAMITASILSKKLAAGLDGLVMDVKVGSGAFMPTAEKSAELARSIVDVGNGAGMKTTAILTDMNQSLAPCAGNALEVACAIDYLTGKSRPARLHDVTMALSAELLVTGGLARDAAHAREKLQQALDSGAAAERFARMVAALGGPADLLDAPARHLARAAVIVPVPAPVSGVVQRVDCRALGLAVVALGGGRTRAEDAIDVSVGLSALAEIGQRIEAGEPLGFVHARDEAAAAHAVDAIRRGYVLGETGEAPPTLYQRVD.

Belongs to the thymidine/pyrimidine-nucleoside phosphorylase family. Homodimer.

The catalysed reaction is thymidine + phosphate = 2-deoxy-alpha-D-ribose 1-phosphate + thymine. The protein operates within pyrimidine metabolism; dTMP biosynthesis via salvage pathway; dTMP from thymine: step 1/2. In terms of biological role, the enzymes which catalyze the reversible phosphorolysis of pyrimidine nucleosides are involved in the degradation of these compounds and in their utilization as carbon and energy sources, or in the rescue of pyrimidine bases for nucleotide synthesis. This is Thymidine phosphorylase from Burkholderia orbicola (strain AU 1054).